The following is a 324-amino-acid chain: Olfactory receptor 11H4 (324 aa).

Residues 1-35 are Extracellular-facing; it reads MSFFFVDLRPMNRSATHIVTEFILLGFPGCWKIQI. The N-linked (GlcNAc...) asparagine glycan is linked to Asn12. A helical membrane pass occupies residues 36 to 56; the sequence is FLFSLFLVIYVLTLLGNGAII. The Cytoplasmic segment spans residues 57–64; it reads YAVRCNPL. Residues 65-85 traverse the membrane as a helical segment; that stretch reads LHTPMYFLLGNFAFLEIWYVS. Residues 86-109 are Extracellular-facing; sequence STIPNMLVNILSKTKAISFSGCFL. Cys107 and Cys199 form a disulfide bridge. The helical transmembrane segment at 110 to 130 threads the bilayer; it reads QFYFFFSLGTTECLFLAVMAY. The Cytoplasmic portion of the chain corresponds to 131–149; that stretch reads DRYLAICHPLQYPAIMTVR. Residues 150 to 170 traverse the membrane as a helical segment; the sequence is FCGKLVSFCWLIGFLGYPIPI. The Extracellular segment spans residues 171 to 207; the sequence is FYISQLPFCGPNIIDHFLCDMDPLMALSCAPAPITEC. A helical membrane pass occupies residues 208–227; the sequence is IFYTQSSLVLFFTSMYILRS. Topologically, residues 228 to 247 are cytoplasmic; the sequence is YILLLTAVFQVPSAAGRRKA. The chain crosses the membrane as a helical span at residues 248 to 268; that stretch reads FSTCGSHLVVVSLFYGTVMVM. Over 269-281 the chain is Extracellular; sequence YVSPTYGIPTLLQ. The helical transmembrane segment at 282 to 302 threads the bilayer; it reads KILTLVYSVTTPLFNPLIYTL. The Cytoplasmic segment spans residues 303 to 324; it reads RNKDMKLALRNVLFGMRIRQNS.

Belongs to the G-protein coupled receptor 1 family.

The protein resides in the cell membrane. In terms of biological role, odorant receptor. This chain is Olfactory receptor 11H4 (OR11H4), found in Homo sapiens (Human).